The sequence spans 354 residues: Sorbitol dehydrogenase (354 aa).

Cysteine 43 contributes to the Zn(2+) binding site. Tyrosine 49 is a substrate binding site. 2 residues coordinate Zn(2+): histidine 67 and glutamate 68. Position 153 (glutamate 153) interacts with substrate. Isoleucine 181, aspartate 201, and arginine 206 together coordinate NAD(+). A phosphoserine mark is found at serine 208 and serine 222. NAD(+) contacts are provided by residues 270–272 (VGL) and 294–296 (VFR). Substrate-binding residues include arginine 296 and tyrosine 297.

This sequence belongs to the zinc-containing alcohol dehydrogenase family. In terms of assembly, homotetramer. Requires Zn(2+) as cofactor. In terms of tissue distribution, expressed in liver.

The protein resides in the mitochondrion membrane. It localises to the cell projection. The protein localises to the cilium. Its subcellular location is the flagellum. It catalyses the reaction xylitol + NAD(+) = D-xylulose + NADH + H(+). It carries out the reaction L-iditol + NAD(+) = keto-L-sorbose + NADH + H(+). The enzyme catalyses keto-D-fructose + NADH + H(+) = D-sorbitol + NAD(+). Functionally, polyol dehydrogenase that catalyzes the reversible NAD(+)-dependent oxidation of various sugar alcohols. Is mostly active with xylitol, L-iditol and D-sorbitol (D-glucitol) as substrates, leading to the C2-oxidized products D-xylulose, L-sorbose and D-fructose, respectively. Is a key enzyme in the polyol pathway that interconverts glucose and fructose via sorbitol, which constitutes an important alternate route for glucose metabolism. May play a role in sperm motility by using sorbitol as an alternative energy source for sperm motility. The chain is Sorbitol dehydrogenase (SORD) from Ovis aries (Sheep).